Here is a 458-residue protein sequence, read N- to C-terminus: ATP synthase subunit beta (458 aa).

Gly148–Thr155 contributes to the ATP binding site.

It belongs to the ATPase alpha/beta chains family. F-type ATPases have 2 components, CF(1) - the catalytic core - and CF(0) - the membrane proton channel. CF(1) has five subunits: alpha(3), beta(3), gamma(1), delta(1), epsilon(1). CF(0) has three main subunits: a(1), b(2) and c(9-12). The alpha and beta chains form an alternating ring which encloses part of the gamma chain. CF(1) is attached to CF(0) by a central stalk formed by the gamma and epsilon chains, while a peripheral stalk is formed by the delta and b chains.

Its subcellular location is the cell inner membrane. The enzyme catalyses ATP + H2O + 4 H(+)(in) = ADP + phosphate + 5 H(+)(out). Its function is as follows. Produces ATP from ADP in the presence of a proton gradient across the membrane. The catalytic sites are hosted primarily by the beta subunits. This chain is ATP synthase subunit beta, found in Pseudomonas fluorescens (strain Pf0-1).